The primary structure comprises 418 residues: Bifunctional enzyme IspD/IspF (418 aa).

The segment at 1 to 261 (MADTPALIPQ…EFKRASDMNF (261 aa)) is 2-C-methyl-D-erythritol 4-phosphate cytidylyltransferase. Residues 262–418 (RIGEGWDIHA…RATVLLRKFI (157 aa)) form a 2-C-methyl-D-erythritol 2,4-cyclodiphosphate synthase region. The a divalent metal cation site is built by Asp268 and His270. Residues 268 to 270 (DIH) and 294 to 295 (HS) contribute to the 4-CDP-2-C-methyl-D-erythritol 2-phosphate site. His302 contacts a divalent metal cation. Residues 316 to 318 (DIG) and 321 to 325 (FPDTD) contribute to the 4-CDP-2-C-methyl-D-erythritol 2-phosphate site.

This sequence in the N-terminal section; belongs to the IspD/TarI cytidylyltransferase family. IspD subfamily. In the C-terminal section; belongs to the IspF family. A divalent metal cation serves as cofactor.

The enzyme catalyses 2-C-methyl-D-erythritol 4-phosphate + CTP + H(+) = 4-CDP-2-C-methyl-D-erythritol + diphosphate. The catalysed reaction is 4-CDP-2-C-methyl-D-erythritol 2-phosphate = 2-C-methyl-D-erythritol 2,4-cyclic diphosphate + CMP. The protein operates within isoprenoid biosynthesis; isopentenyl diphosphate biosynthesis via DXP pathway; isopentenyl diphosphate from 1-deoxy-D-xylulose 5-phosphate: step 2/6. It functions in the pathway isoprenoid biosynthesis; isopentenyl diphosphate biosynthesis via DXP pathway; isopentenyl diphosphate from 1-deoxy-D-xylulose 5-phosphate: step 4/6. Bifunctional enzyme that catalyzes the formation of 4-diphosphocytidyl-2-C-methyl-D-erythritol from CTP and 2-C-methyl-D-erythritol 4-phosphate (MEP) (IspD), and catalyzes the conversion of 4-diphosphocytidyl-2-C-methyl-D-erythritol 2-phosphate (CDP-ME2P) to 2-C-methyl-D-erythritol 2,4-cyclodiphosphate (ME-CPP) with a corresponding release of cytidine 5-monophosphate (CMP) (IspF). The sequence is that of Bifunctional enzyme IspD/IspF from Albidiferax ferrireducens (strain ATCC BAA-621 / DSM 15236 / T118) (Rhodoferax ferrireducens).